Here is a 511-residue protein sequence, read N- to C-terminus: Xylose import ATP-binding protein XylG (511 aa).

2 ABC transporter domains span residues 6–244 and 261–506; these read LEMR…VGRE and FEAR…IGKP.

The protein belongs to the ABC transporter superfamily. Xylose importer (TC 3.A.1.2.4) family. The complex is composed of two ATP-binding proteins (XylG), two transmembrane proteins (XylH) and a solute-binding protein (XylF).

The protein localises to the cell inner membrane. It carries out the reaction D-xylose(out) + ATP + H2O = D-xylose(in) + ADP + phosphate + H(+). Its function is as follows. Part of the ABC transporter complex XylFGH involved in xylose import. Responsible for energy coupling to the transport system. The polypeptide is Xylose import ATP-binding protein XylG (Brucella melitensis biotype 1 (strain ATCC 23456 / CCUG 17765 / NCTC 10094 / 16M)).